The following is a 4518-amino-acid chain: Dynein axonemal heavy chain 11 (4518 aa).

The segment at 1–1857 (MAASVAAQEA…LVHICDAQFQ (1857 aa)) is stem. AAA regions lie at residues 1858–2079 (YFYE…VLVV), 2139–2368 (QMVR…TSFK), 2474–2721 (TMDP…VFQG), and 2819–3068 (NYND…EGRH). ATP-binding positions include 1896–1903 (GPAGTGKT), 2177–2184 (GNAGTGKS), 2512–2519 (GNAGVGKT), and 2857–2864 (GVGGSGKQ). Positions 3074–3405 (KSFLEQISLF…GQSIKSFEAQ (332 aa)) are stalk. Residues 3322–3391 (LAQANLELAT…NRLVKELEVK (70 aa)) adopt a coiled-coil conformation. 2 AAA regions span residues 3461 to 3688 (LTDD…EIER) and 3898 to 4124 (LRNF…VLYN).

It belongs to the dynein heavy chain family. Consists of at least two heavy chains and a number of intermediate and light chains. Interacts with CFAP45.

It is found in the cytoplasm. The protein localises to the cytoskeleton. Its subcellular location is the cilium axoneme. Functionally, force generating protein of respiratory cilia. Produces force towards the minus ends of microtubules. Dynein has ATPase activity; the force-producing power stroke is thought to occur on release of ADP. This is Dynein axonemal heavy chain 11 (DNAH11) from Sus scrofa (Pig).